A 320-amino-acid chain; its full sequence is MAHNHSHTESGNSKRLLAAFIITATFMVAEVIGGLLSGSLALLADAGHMLTDAAALFVALVAVRFAQRKPNARHTFGYLRLTTLAAFVNALTLILITAFIFWEAIQRFYDPQPVAGVPMLLVAIAGLLANIVAFWLLHHGSEEKNINVRAAALHVLGDLLGSVGAIAAAIIILYTNWTPIDPILSILVSCLVLRSAWALLKESIHELLEGTPSQLSVEALQKDVTLNIPEVRNIHHVHLWQVGEKPMMTLHAQVVPPHDHDALLRRIQEYLLKHYQIEHATIQMEYQRCDDDHCSFHQENHHLAIHDGEKHDAEGHHHKH.

The next 6 membrane-spanning stretches (helical) occupy residues 16–36 (LLAA…GGLL), 43–63 (LADA…LVAV), 85–105 (AAFV…WEAI), 117–137 (VPML…FWLL), 153–173 (LHVL…IIIL), and 180–200 (IDPI…WALL).

The protein belongs to the cation diffusion facilitator (CDF) transporter (TC 2.A.4) family. SLC30A subfamily.

The protein resides in the cell inner membrane. Involved in zinc efflux across the cytoplasmic membrane, thus reducing zinc accumulation in the cytoplasm and rendering bacteria more resistant to zinc. It may contribute to zinc homeostasis at low concentrations of zinc. This Pectobacterium atrosepticum (strain SCRI 1043 / ATCC BAA-672) (Erwinia carotovora subsp. atroseptica) protein is Zinc transporter ZitB.